A 1097-amino-acid chain; its full sequence is DNA-directed RNA polymerase subunit beta (1097 aa).

The disordered stretch occupies residues 1072-1097 (QDVNPRRSTPSRPTYESLGVADYDED).

It belongs to the RNA polymerase beta chain family. As to quaternary structure, in cyanobacteria the RNAP catalytic core is composed of 2 alpha, 1 beta, 1 beta', 1 gamma and 1 omega subunit. When a sigma factor is associated with the core the holoenzyme is formed, which can initiate transcription.

The catalysed reaction is RNA(n) + a ribonucleoside 5'-triphosphate = RNA(n+1) + diphosphate. In terms of biological role, DNA-dependent RNA polymerase catalyzes the transcription of DNA into RNA using the four ribonucleoside triphosphates as substrates. This Synechococcus sp. (strain WH7803) protein is DNA-directed RNA polymerase subunit beta.